The primary structure comprises 354 residues: S-adenosylmethionine:tRNA ribosyltransferase-isomerase (354 aa).

It belongs to the QueA family. In terms of assembly, monomer.

It is found in the cytoplasm. The catalysed reaction is 7-aminomethyl-7-carbaguanosine(34) in tRNA + S-adenosyl-L-methionine = epoxyqueuosine(34) in tRNA + adenine + L-methionine + 2 H(+). Its pathway is tRNA modification; tRNA-queuosine biosynthesis. In terms of biological role, transfers and isomerizes the ribose moiety from AdoMet to the 7-aminomethyl group of 7-deazaguanine (preQ1-tRNA) to give epoxyqueuosine (oQ-tRNA). This is S-adenosylmethionine:tRNA ribosyltransferase-isomerase from Klebsiella pneumoniae (strain 342).